We begin with the raw amino-acid sequence, 152 residues long: MMKKIDVKILDPRVGQQFPLPTYATSGSAGLDLRACLDGAVELAPGATTLVPTGLAIHIADPSLAAVMLPRSGLGHKHGIVLGNLVGLIDSDYQGQLMVSIWNRGQDSFTIEPGERIAQMVFVPVVQAEFNLVEAFDATERGEGGFGHSGRK.

Residues Arg71–Gly73, Asn84, Leu88–Asp90, and Met98 contribute to the substrate site.

The protein belongs to the dUTPase family. Requires Mg(2+) as cofactor.

The enzyme catalyses dUTP + H2O = dUMP + diphosphate + H(+). Its pathway is pyrimidine metabolism; dUMP biosynthesis; dUMP from dCTP (dUTP route): step 2/2. This enzyme is involved in nucleotide metabolism: it produces dUMP, the immediate precursor of thymidine nucleotides and it decreases the intracellular concentration of dUTP so that uracil cannot be incorporated into DNA. The chain is Deoxyuridine 5'-triphosphate nucleotidohydrolase from Salmonella arizonae (strain ATCC BAA-731 / CDC346-86 / RSK2980).